Here is a 252-residue protein sequence, read N- to C-terminus: uncharacterized protein (252 aa).

A helical membrane pass occupies residues 80–100 (LSVLVIGSTMFTHAGVLPVLA).

It localises to the host membrane. It is found in the virion. This is an uncharacterized protein from Acanthamoeba polyphaga mimivirus (APMV).